The chain runs to 757 residues: Probable ubiquitin carboxyl-terminal hydrolase MINDY-4 (757 aa).

Disordered stretches follow at residues 152–173 (FVSS…GETP) and 190–334 (SLDV…LPGG). Basic and acidic residues predominate over residues 190 to 201 (SLDVKRMGENSR). Phosphoserine is present on residues S219 and S223. The segment covering 232–242 (SSPSSSSTQPQ) has biased composition (low complexity). Positions 254 to 277 (CTQQDILASSNSSPSRTSLGQLSE) are enriched in polar residues. Position 289 is a phosphoserine (S289). The segment covering 299–310 (PPWDRARPRDPS) has biased composition (basic and acidic residues). C456 (nucleophile) is an active-site residue. The Proton acceptor role is filled by H677.

Belongs to the MINDY deubiquitinase family. FAM188 subfamily.

It carries out the reaction Thiol-dependent hydrolysis of ester, thioester, amide, peptide and isopeptide bonds formed by the C-terminal Gly of ubiquitin (a 76-residue protein attached to proteins as an intracellular targeting signal).. Probable hydrolase that can remove 'Lys-48'-linked conjugated ubiquitin from proteins. In Homo sapiens (Human), this protein is Probable ubiquitin carboxyl-terminal hydrolase MINDY-4.